We begin with the raw amino-acid sequence, 289 residues long: LysM and putative peptidoglycan-binding domain-containing protein 4 (289 aa).

The tract at residues 1–23 is disordered; that stretch reads MRLREGPTHSFQPPSSVHSSLGS. The Extracellular portion of the chain corresponds to 1–208; that stretch reads MRLREGPTHS…PASGADWGIR (208 aa). Positions 9–23 are enriched in polar residues; sequence HSFQPPSSVHSSLGS. N-linked (GlcNAc...) asparagine glycans are attached at residues Asn-30 and Asn-59. A LysM domain is found at 71–115; it reads LERAITEDDNLNKLALQYGCKVSDIKRVNNLITDQDIYALKTIKI. N-linked (GlcNAc...) asparagine glycans are attached at residues Asn-134 and Asn-178. The chain crosses the membrane as a helical span at residues 209–229; that stretch reads WWNAVFIMLLVGIVLPVFYIV. Residues 230–289 lie on the Cytoplasmic side of the membrane; that stretch reads YFKTQGDSEGTFSIEGRTNVSTSLSPHTNTGHSMEQMTQRTSGFSPGLLQDTHKLLNPGG. The interval 252 to 272 is disordered; that stretch reads SLSPHTNTGHSMEQMTQRTSG.

Its subcellular location is the membrane. This Xenopus laevis (African clawed frog) protein is LysM and putative peptidoglycan-binding domain-containing protein 4 (lysmd4).